We begin with the raw amino-acid sequence, 282 residues long: Succinate dehydrogenase [ubiquinone] iron-sulfur subunit, mitochondrial (282 aa).

The transit peptide at 1-26 (MAAVVFSLRRSGPVLRLSGALQVSRG) directs the protein to the mitochondrion. The 2Fe-2S ferredoxin-type domain occupies 42–135 (KKFAIYRWDP…VSKIYPLPHM (94 aa)). [2Fe-2S] cluster-binding residues include cysteine 95, cysteine 100, cysteine 103, and cysteine 115. The 4Fe-4S ferredoxin-type domain maps to 178 to 208 (DRDKLDGLYECILCACCSTSCPSYWWNADKY). Residues cysteine 188, cysteine 191, and cysteine 194 each contribute to the [4Fe-4S] cluster site. Cysteine 198 lines the [3Fe-4S] cluster pocket. Residue tryptophan 203 coordinates a ubiquinone. [3Fe-4S] cluster-binding residues include cysteine 245 and cysteine 251. Residue cysteine 255 coordinates [4Fe-4S] cluster.

This sequence belongs to the succinate dehydrogenase/fumarate reductase iron-sulfur protein family. As to quaternary structure, component of complex II composed of four subunits: the flavoprotein (FP) sdha, iron-sulfur protein (IP) sdhb, and a cytochrome b composed of sdhc and sdhd. Requires [2Fe-2S] cluster as cofactor. [3Fe-4S] cluster serves as cofactor. The cofactor is [4Fe-4S] cluster.

The protein localises to the mitochondrion inner membrane. It carries out the reaction a quinone + succinate = fumarate + a quinol. The catalysed reaction is (R)-malate + a quinone = enol-oxaloacetate + a quinol. It catalyses the reaction (S)-malate + a quinone = enol-oxaloacetate + a quinol. Its pathway is carbohydrate metabolism; tricarboxylic acid cycle; fumarate from succinate (eukaryal route): step 1/1. Its activity is regulated as follows. Enol-oxaloacetate inhibits the succinate dehydrogenase activity. Functionally, iron-sulfur protein (IP) subunit of the succinate dehydrogenase complex (mitochondrial respiratory chain complex II), responsible for transferring electrons from succinate to ubiquinone (coenzyme Q). SDH also oxidizes malate to the non-canonical enol form of oxaloacetate, enol-oxaloacetate. Enol-oxaloacetate, which is a potent inhibitor of the succinate dehydrogenase activity, is further isomerized into keto-oxaloacetate. This chain is Succinate dehydrogenase [ubiquinone] iron-sulfur subunit, mitochondrial (sdhb), found in Xenopus laevis (African clawed frog).